A 443-amino-acid chain; its full sequence is Xaa-Pro dipeptidase (443 aa).

Mn(2+) contacts are provided by D246, D257, H339, E384, and E423.

It belongs to the peptidase M24B family. Bacterial-type prolidase subfamily. Requires Mn(2+) as cofactor.

The catalysed reaction is Xaa-L-Pro dipeptide + H2O = an L-alpha-amino acid + L-proline. Functionally, splits dipeptides with a prolyl residue in the C-terminal position. This Klebsiella pneumoniae subsp. pneumoniae (strain ATCC 700721 / MGH 78578) protein is Xaa-Pro dipeptidase.